The chain runs to 86 residues: Centromere protein W (86 aa).

It belongs to the CENP-W/WIP1 family. Heterodimer with CENPT; this dimer coassembles with CENPS-CENPX heterodimers at centromeres to form the tetrameric CENP-T-W-S-X complex, which is a subcomplex of the large constitutive centromere-associated network (CCAN, also known as the interphase centromere complex or ICEN). Interacts with NPM1.

It is found in the nucleus. The protein resides in the chromosome. Its subcellular location is the centromere. The protein localises to the kinetochore. It localises to the nucleus matrix. It is found in the nucleolus. Functionally, component of the CENPA-NAC (nucleosome-associated) complex, a complex that plays a central role in assembly of kinetochore proteins, mitotic progression and chromosome segregation. The CENPA-NAC complex recruits the CENPA-CAD (nucleosome distal) complex and may be involved in incorporation of newly synthesized CENPA into centromeres. Part of a nucleosome-associated complex that binds specifically to histone H3-containing nucleosomes at the centromere, as opposed to nucleosomes containing CENPA. Component of the heterotetrameric CENP-T-W-S-X complex that binds and supercoils DNA, and plays an important role in kinetochore assembly. CENPW has a fundamental role in kinetochore assembly and function. It is one of the inner kinetochore proteins, with most further proteins binding downstream. Required for normal chromosome organization and normal progress through mitosis. The chain is Centromere protein W (Cenpw) from Rattus norvegicus (Rat).